Consider the following 141-residue polypeptide: Ly6/PLAUR domain-containing protein 1 (141 aa).

The N-terminal stretch at Met-1–Ala-20 is a signal peptide. 6 disulfides stabilise this stretch: Cys-25–Cys-54, Cys-28–Cys-37, Cys-46–Cys-71, Cys-77–Cys-100, Cys-88–Cys-97, and Cys-101–Cys-106. Residues Cys-25 to Gly-108 form the UPAR/Ly6 domain. N-linked (GlcNAc...) asparagine glycosylation is present at Asn-45. A lipid anchor (GPI-anchor amidated glycine) is attached at Gly-115. The propeptide at Ser-116–Cys-141 is removed in mature form.

As to quaternary structure, interacts with CHRNA4 and nAChRs containing alpha-4:beta-2 (CHRNA4:CHRNB2) and alpha-7 (CHRNA7) subunits.

Its subcellular location is the cell membrane. Believed to act as a modulator of nicotinic acetylcholine receptors (nAChRs) activity. In vitro increases receptor desensitization and decreases affinity for ACh of alpha-4:beta-2-containing nAChRs. May play a role in the intracellular trafficking of alpha-4:beta-2 and alpha-7-containing nAChRs and may inhibit their expression at the cell surface. May be involved in the control of anxiety. This Rattus norvegicus (Rat) protein is Ly6/PLAUR domain-containing protein 1 (Lypd1).